The chain runs to 352 residues: tRNA N6-adenosine threonylcarbamoyltransferase (352 aa).

Histidine 109 and histidine 113 together coordinate Fe cation. Substrate-binding positions include threonine 136–glycine 140, aspartate 169, glycine 182, aspartate 186, and asparagine 284. Residue aspartate 312 participates in Fe cation binding.

The protein belongs to the KAE1 / TsaD family. Fe(2+) serves as cofactor.

It is found in the cytoplasm. It carries out the reaction L-threonylcarbamoyladenylate + adenosine(37) in tRNA = N(6)-L-threonylcarbamoyladenosine(37) in tRNA + AMP + H(+). Required for the formation of a threonylcarbamoyl group on adenosine at position 37 (t(6)A37) in tRNAs that read codons beginning with adenine. Is involved in the transfer of the threonylcarbamoyl moiety of threonylcarbamoyl-AMP (TC-AMP) to the N6 group of A37, together with TsaE and TsaB. TsaD likely plays a direct catalytic role in this reaction. The chain is tRNA N6-adenosine threonylcarbamoyltransferase from Chloroherpeton thalassium (strain ATCC 35110 / GB-78).